The following is a 112-amino-acid chain: UPF0212 protein Mpal_1084 (112 aa).

The protein belongs to the UPF0212 family.

This chain is UPF0212 protein Mpal_1084, found in Methanosphaerula palustris (strain ATCC BAA-1556 / DSM 19958 / E1-9c).